We begin with the raw amino-acid sequence, 431 residues long: MDKLSIREDNYNIKHKTISLNRASSVTRNLKGLLKFLGPAFVVSVAYIDPGNFATNISGGSSFNYNLIWVILWSNLMAIFLQTMSAKLGIATGCSLPEMCAKVFSKRANWIFWIVGELGAMATDLAEFIGGTLGLYLLFRIPMIYAGLLTGVLTFIIVYMEKYGQKMVETIIAALIAVICVAYTIELFLARPAWTQVGMHTLIPSLPNGEAVLIAVGMLGATVMPHVIYLHSELVQHRNTNSSDKEKLHHLKMEKIDILIAMNIAFVVNAAMVIVSAAVFFKHGIKVSTIEEAHRSLQPLLGNLSSGAFGIALLASGLSSSAVGTMAGQTIMKGFVNLSIPINLRRIITMLPALIIIALGINPMRVLVLSQVALSFILPFPIIQMLLIAGRKDLMGILVNKKFTKIVGFIIATMIILLNIILLYLTFTGQT.

11 helical membrane-spanning segments follow: residues 33–53 (LLKF…PGNF), 61–81 (SSFN…AIFL), 110–130 (WIFW…EFIG), 141–161 (IPMI…VYME), 170–190 (TIIA…LFLA), 211–231 (AVLI…IYLH), 258–278 (ILIA…VSAA), 307–327 (GAFG…GTMA), 347–367 (IITM…MRVL), 368–388 (VLSQ…MLLI), and 406–426 (IVGF…LYLT).

This sequence belongs to the NRAMP family.

It localises to the cell membrane. H(+)-stimulated, divalent metal cation uptake system. The chain is Divalent metal cation transporter MntH from Clostridium acetobutylicum (strain ATCC 824 / DSM 792 / JCM 1419 / IAM 19013 / LMG 5710 / NBRC 13948 / NRRL B-527 / VKM B-1787 / 2291 / W).